The primary structure comprises 205 residues: High frequency lysogenization protein HflD homolog (205 aa).

This sequence belongs to the HflD family.

The protein resides in the cytoplasm. It localises to the cell inner membrane. In Vibrio cholerae serotype O1 (strain ATCC 39541 / Classical Ogawa 395 / O395), this protein is High frequency lysogenization protein HflD homolog.